The following is a 213-amino-acid chain: MSNRTALLGKKLGMSQVWDENGFFVPVTLVDVSTNVVTAVKSEESDGYKAVQLGYGQVDPTKVTKPLAGHFAKAGVTPRRHLAEVRTDNAEEFEPGQELTAELFPEGTLVDVTGTTKGKGFAGTIKRWGFKSYRRTHGSHKNERRPGSVGACATPSRILKGKRMAGRMGHVTNTALNLTIVSSDVENGVLAIKGAIPGPKGSIVLVRSAVKGA.

Belongs to the universal ribosomal protein uL3 family. As to quaternary structure, part of the 50S ribosomal subunit. Forms a cluster with proteins L14 and L19.

Its function is as follows. One of the primary rRNA binding proteins, it binds directly near the 3'-end of the 23S rRNA, where it nucleates assembly of the 50S subunit. The protein is Large ribosomal subunit protein uL3 of Bifidobacterium adolescentis (strain ATCC 15703 / DSM 20083 / NCTC 11814 / E194a).